Consider the following 319-residue polypeptide: ATP-dependent 6-phosphofructokinase (319 aa).

Glycine 11 contributes to the ATP binding site. 21-25 provides a ligand contact to ADP; the sequence is RAVTR. Residues 72-73 and 102-105 contribute to the ATP site; these read RY and GDGS. Aspartate 103 contacts Mg(2+). 125-127 contributes to the substrate binding site; that stretch reads TID. The Proton acceptor role is filled by aspartate 127. Position 154 (arginine 154) interacts with ADP. Residues arginine 162 and 169–171 each bind substrate; that span reads MGR. ADP-binding positions include 185-187 and 213-215; these read GAD and KDH. Residues glutamate 222, arginine 243, and 249–252 contribute to the substrate site; that span reads HMQR.

The protein belongs to the phosphofructokinase type A (PFKA) family. ATP-dependent PFK group I subfamily. Prokaryotic clade 'B1' sub-subfamily. Homotetramer. The cofactor is Mg(2+).

Its subcellular location is the cytoplasm. The catalysed reaction is beta-D-fructose 6-phosphate + ATP = beta-D-fructose 1,6-bisphosphate + ADP + H(+). The protein operates within carbohydrate degradation; glycolysis; D-glyceraldehyde 3-phosphate and glycerone phosphate from D-glucose: step 3/4. Its activity is regulated as follows. Allosterically activated by ADP and other diphosphonucleosides, and allosterically inhibited by phosphoenolpyruvate. The binding affinities for these effectors are decreased however, and therefore the allosteric effect becomes apparent only at high effector concentrations. Functionally, catalyzes the phosphorylation of D-fructose 6-phosphate to fructose 1,6-bisphosphate by ATP, the first committing step of glycolysis. The sequence is that of ATP-dependent 6-phosphofructokinase from Lactobacillus delbrueckii subsp. bulgaricus.